The following is a 381-amino-acid chain: Alkanesulfonate monooxygenase (381 aa).

Belongs to the SsuD family. In terms of assembly, homotetramer.

The enzyme catalyses an alkanesulfonate + FMNH2 + O2 = an aldehyde + FMN + sulfite + H2O + 2 H(+). Functionally, catalyzes the desulfonation of aliphatic sulfonates. The protein is Alkanesulfonate monooxygenase of Shigella flexneri serotype 5b (strain 8401).